A 180-amino-acid polypeptide reads, in one-letter code: uncharacterized protein (180 aa).

This is an uncharacterized protein from Aquifex aeolicus (strain VF5).